The primary structure comprises 557 residues: Low affinity inorganic phosphate transporter 8 (557 aa).

The Cytoplasmic portion of the chain corresponds to 1 to 20 (MATSHGVLRSLDNAKTQSYH). A helical membrane pass occupies residues 21-41 (YLAIVIAGMGFFTDAYDLFCI). Over 42–70 (TAVTKLIGRLYYSDPTNHSPGILPTNVNN) the chain is Extracellular. The chain crosses the membrane as a helical span at residues 71 to 91 (AITGVALCGTLAGQLFFGWLG). Over 92 to 98 (DKLGRKK) the chain is Cytoplasmic. The chain crosses the membrane as a helical span at residues 99-119 (VYGITLTTMVGFALLSGLSFG). Residues 120–130 (STPKTVVTSLC) lie on the Extracellular side of the membrane. Residues 131–151 (FFRFWLGFGIGGDYPLSAVIM) traverse the membrane as a helical segment. Residues 152-162 (SEYANQKTRGS) lie on the Cytoplasmic side of the membrane. The chain crosses the membrane as a helical span at residues 163 to 183 (FIAAVFAMQGVGILVAGGVAM). At 184–210 (FVSKLFLLYFPAPDFETDAVLSTQPEG) the chain is on the extracellular side. Residues 211 to 231 (DFVWRIVLMFGAVPAALTYYW) form a helical membrane-spanning segment. Residues 232 to 294 (RMKMPETARY…LFSSEFLNRH (63 aa)) lie on the Cytoplasmic side of the membrane. Residues 295-315 (GLHLLGTTSTWFLLDIAFYSL) traverse the membrane as a helical segment. At 316–346 (QLTQKDIYPTSGLVYKASKMNAIEEVFQLSR) the chain is on the extracellular side. Residues 347-367 (AMFAVALIATVPGYWCTVFLI) form a helical membrane-spanning segment. The Cytoplasmic segment spans residues 368-369 (EK). Residues 370–390 (IGRFRIQLIGFLVMSVCMWFL) traverse the membrane as a helical segment. At 391–414 (GHNYRSFRGEESACKNGSKYSFCN) the chain is on the extracellular side. Asparagine 406 carries an N-linked (GlcNAc...) asparagine glycan. Residues 415-435 (GNPVMFAILFGLTLFFANFGP) form a helical membrane-spanning segment. Residues 436 to 457 (NSTTFIVPAELFPARLRSTCHG) are Cytoplasmic-facing. The chain crosses the membrane as a helical span at residues 458–478 (ISAAAGKSGAIVGAFGVQSYI). Residues 479 to 490 (GNSHDKSKGTKQ) lie on the Extracellular side of the membrane. The chain crosses the membrane as a helical span at residues 491 to 511 (AIMALAVVNLLGFFFTFLVPE). The Cytoplasmic segment spans residues 512-557 (TQGRSLEEISGEEKDFQGNNADEEISGERNGTRNASVDKSPETSMV). The interval 519–557 (EISGEEKDFQGNNADEEISGERNGTRNASVDKSPETSMV) is disordered. Residues 543–557 (TRNASVDKSPETSMV) are compositionally biased toward polar residues.

The protein belongs to the major facilitator superfamily. Phosphate:H(+) symporter (TC 2.A.1.9) family.

The protein resides in the cell membrane. It catalyses the reaction phosphate(in) + H(+)(in) = phosphate(out) + H(+)(out). Its function is as follows. Low-affinity transporter for external inorganic phosphate (Pi) that may be involved in the acquisition of phosphate released by arbuscular mycorrhizal (AM) fungi (e.g. Glomus versiforme and G.intraradices) during AM symbiosis; not required for mycorrhizal arbuscule development. In Medicago truncatula (Barrel medic), this protein is Low affinity inorganic phosphate transporter 8.